We begin with the raw amino-acid sequence, 78 residues long: Large ribosomal subunit protein eL38 (78 aa).

It belongs to the eukaryotic ribosomal protein eL38 family. In terms of assembly, component of the large ribosomal subunit (LSU). Mature yeast ribosomes consist of a small (40S) and a large (60S) subunit. The 40S small subunit contains 1 molecule of ribosomal RNA (18S rRNA) and 33 different proteins (encoded by 57 genes). The large 60S subunit contains 3 rRNA molecules (25S, 5.8S and 5S rRNA) and 46 different proteins (encoded by 81 genes).

It localises to the cytoplasm. In terms of biological role, component of the ribosome, a large ribonucleoprotein complex responsible for the synthesis of proteins in the cell. The small ribosomal subunit (SSU) binds messenger RNAs (mRNAs) and translates the encoded message by selecting cognate aminoacyl-transfer RNA (tRNA) molecules. The large subunit (LSU) contains the ribosomal catalytic site termed the peptidyl transferase center (PTC), which catalyzes the formation of peptide bonds, thereby polymerizing the amino acids delivered by tRNAs into a polypeptide chain. The nascent polypeptides leave the ribosome through a tunnel in the LSU and interact with protein factors that function in enzymatic processing, targeting, and the membrane insertion of nascent chains at the exit of the ribosomal tunnel. This Saccharomyces cerevisiae (strain ATCC 204508 / S288c) (Baker's yeast) protein is Large ribosomal subunit protein eL38.